Here is a 376-residue protein sequence, read N- to C-terminus: MAARFSIQPIGRFAGESQPVKRPKEFACFSYDDNHEFRLDGSSLKYYYTPQLGADLSKGFDTFQKLDDTGDDHLDSLLKTIVAHEQETGKKIDANVVTWRGMMTKIMATPFDNMDGFEMNATLYQVCPSFIEENNAYKVASRSNEGNNNRRRRGPPLEVMQFWGYKFETLSTLPAPWAETPREFIENRENEVVNNKAQYCSVVRTGIGKSVLCLGGEVDAIWDSKPEEKGSPINWVELKTSAEIRNTGDMENFNRKLMKYWIQSFLLGVPRIVVGFRTRDGILVEAKDIETHRIPETVNSYPNPKWNADMCVNFAATFLDWLSANITDEGVWRIKREPQSPTIELFKVEETGHGDILSDEFKNWRIKLALGPSNES.

Residue Glu168 coordinates a divalent metal cation. Residues Cys200 and Glu217 each coordinate substrate. Residues Asp219, Glu237, and Leu238 each contribute to the a divalent metal cation site. Substrate-binding residues include Lys239 and Gln263.

Belongs to the DXO/Dom3Z family. In terms of assembly, interacts with RAT1; the interaction is direct, stabilizes RAT1 protein structure and stimulates its exoribonuclease activity. The interaction also stimulates RAI1 pyrophosphohydrolase activity, probably by recruiting it to mRNA substrates. A divalent metal cation is required as a cofactor.

The protein localises to the nucleus. The catalysed reaction is a 5'-end NAD(+)-phospho-ribonucleoside in mRNA + H2O = a 5'-end phospho-ribonucleoside in mRNA + NAD(+) + H(+). It catalyses the reaction a 5'-end (N(7)-methyl 5'-triphosphoguanosine)-ribonucleoside-ribonucleotide in mRNA + H2O = a (N(7)-methyl 5'-triphosphoguanosine)-nucleoside + a 5'-end phospho-ribonucleoside in mRNA + H(+). The enzyme catalyses a 5'-end triphospho-ribonucleoside in mRNA + H2O = a 5'-end phospho-ribonucleoside in mRNA + diphosphate + H(+). Functionally, decapping enzyme for NAD-capped RNAs: specifically hydrolyzes the nicotinamide adenine dinucleotide (NAD) cap from a subset of RNAs by removing the entire NAD moiety from the 5'-end of an NAD-capped RNA. The NAD-cap is present at the 5'-end of some RNAs and snoRNAs. In contrast to the canonical 5'-end N7 methylguanosine (m7G) cap, the NAD cap promotes mRNA decay. Also acts as a non-canonical decapping enzyme that removes the entire cap structure of m7G capped or incompletely capped RNAs. Has decapping activity toward incomplete 5'-end m7G cap mRNAs such as unmethylated 5'-end-capped RNA (cap0), while it has no activity toward 2'-O-ribose methylated m7G cap (cap1). Also possesses RNA 5'-pyrophosphohydrolase activity by hydrolyzing the 5'-end triphosphate to release pyrophosphates. Stimulates exoribonuclease activity of Rat1, allowing it to degrade RNAs with stable secondary structure more effectively. This Gibberella zeae (strain ATCC MYA-4620 / CBS 123657 / FGSC 9075 / NRRL 31084 / PH-1) (Wheat head blight fungus) protein is Decapping nuclease RAI1 (RAI1).